The sequence spans 183 residues: 2-C-methyl-D-erythritol 2,4-cyclodiphosphate synthase (183 aa).

The a divalent metal cation site is built by Asp8 and His10. 4-CDP-2-C-methyl-D-erythritol 2-phosphate is bound by residues 8-10 (DVH) and 34-35 (HS). His42 contacts a divalent metal cation. 4-CDP-2-C-methyl-D-erythritol 2-phosphate contacts are provided by residues 56 to 58 (DIG), 61 to 65 (FPDTD), 132 to 135 (TTEE), and Phe139.

It belongs to the IspF family. As to quaternary structure, homotrimer. Requires a divalent metal cation as cofactor.

It carries out the reaction 4-CDP-2-C-methyl-D-erythritol 2-phosphate = 2-C-methyl-D-erythritol 2,4-cyclic diphosphate + CMP. The protein operates within isoprenoid biosynthesis; isopentenyl diphosphate biosynthesis via DXP pathway; isopentenyl diphosphate from 1-deoxy-D-xylulose 5-phosphate: step 4/6. Involved in the biosynthesis of isopentenyl diphosphate (IPP) and dimethylallyl diphosphate (DMAPP), two major building blocks of isoprenoid compounds. Catalyzes the conversion of 4-diphosphocytidyl-2-C-methyl-D-erythritol 2-phosphate (CDP-ME2P) to 2-C-methyl-D-erythritol 2,4-cyclodiphosphate (ME-CPP) with a corresponding release of cytidine 5-monophosphate (CMP). In Lachnospira eligens (strain ATCC 27750 / DSM 3376 / VPI C15-48 / C15-B4) (Eubacterium eligens), this protein is 2-C-methyl-D-erythritol 2,4-cyclodiphosphate synthase.